Here is a 344-residue protein sequence, read N- to C-terminus: MLDHVLLLTYCLVSTVVRSQPSADVFRSFAGYIPEDHRVTHHEWQNSGKFQGDIDGVDPNLLKLPEGPVLFNALKNKQLTWEGGVIPYEMDTAFSPNEIKILEKAFDSYRRTTCIRFEKREGQTDYLNIVKGYGCYSQVGRTGGKQEISLGRGCFFHEIIVHELMHSVGFWHEHSRADRDDHIKINWDNILPGMKSQFDKISAVLQDLQGENYDYKSIMHYDSTAFSRNGRNTIETVENGFTQVIGTAMDLSPLDIVKINKLYSCKTKKKEKVKPATTEEPHQLIPQVVDKNSVDSGEKCVDHFADCPHFAQYCTRASFFFVMKSYCPFTCKHCPGDRKLKKSG.

The signal sequence occupies residues 1-19 (MLDHVLLLTYCLVSTVVRS). A Peptidase M12A domain is found at 72–266 (NALKNKQLTW…VKINKLYSCK (195 aa)). 5 disulfides stabilise this stretch: C114–C265, C135–C154, C300–C334, C307–C327, and C314–C331. Position 162 (H162) interacts with Zn(2+). E163 is a catalytic residue. Zn(2+) is bound by residues H166 and H172. Residues 300 to 334 (CVDHFADCPHFAQYCTRASFFFVMKSYCPFTCKHC) form the ShKT domain.

Zn(2+) is required as a cofactor. As to expression, expressed in pharyngeal and body wall muscles, intestine, hypodermis and pharyngeal mc2 cells.

The protein localises to the secreted. Functionally, metalloprotease. This Caenorhabditis elegans protein is Zinc metalloproteinase nas-6 (nas-6).